The sequence spans 309 residues: Methionyl-tRNA formyltransferase (309 aa).

109–112 (SLLP) is a (6S)-5,6,7,8-tetrahydrofolate binding site.

Belongs to the Fmt family.

It catalyses the reaction L-methionyl-tRNA(fMet) + (6R)-10-formyltetrahydrofolate = N-formyl-L-methionyl-tRNA(fMet) + (6S)-5,6,7,8-tetrahydrofolate + H(+). Functionally, attaches a formyl group to the free amino group of methionyl-tRNA(fMet). The formyl group appears to play a dual role in the initiator identity of N-formylmethionyl-tRNA by promoting its recognition by IF2 and preventing the misappropriation of this tRNA by the elongation apparatus. The chain is Methionyl-tRNA formyltransferase from Clostridium botulinum (strain Alaska E43 / Type E3).